We begin with the raw amino-acid sequence, 136 residues long: Large ribosomal subunit protein eL27 (136 aa).

This sequence belongs to the eukaryotic ribosomal protein eL27 family.

This Candida albicans (Yeast) protein is Large ribosomal subunit protein eL27 (RPL27).